A 697-amino-acid polypeptide reads, in one-letter code: Ion-translocating oxidoreductase complex subunit C (697 aa).

2 consecutive 4Fe-4S ferredoxin-type domains span residues 366–397 and 407–436; these read AEMG…QQLY and KARN…VQYY. [4Fe-4S] cluster is bound by residues cysteine 377, cysteine 380, cysteine 383, cysteine 387, cysteine 416, cysteine 419, cysteine 422, and cysteine 426. A disordered region spans residues 576-674; it reads AQLESEPVKS…APEEDPRKAA (99 aa). Positions 581-596 are enriched in basic and acidic residues; that stretch reads EPVKSESEAPEEDPRK. Residues 597–615 show a composition bias toward low complexity; that stretch reads AAVAAAIARVKAKKAAQAQ. Residues 619 to 634 are compositionally biased toward basic and acidic residues; the sequence is EPVKSESEAPEEDPRK. The segment covering 635–653 has biased composition (low complexity); that stretch reads AAVAAAIARVKAKKAAQAQ. The segment covering 657–672 has biased composition (basic and acidic residues); it reads EPVKSESEAPEEDPRK.

This sequence belongs to the 4Fe4S bacterial-type ferredoxin family. RnfC subfamily. As to quaternary structure, the complex is composed of six subunits: RnfA, RnfB, RnfC, RnfD, RnfE and RnfG. [4Fe-4S] cluster is required as a cofactor.

It localises to the cell inner membrane. In terms of biological role, part of a membrane-bound complex that couples electron transfer with translocation of ions across the membrane. The polypeptide is Ion-translocating oxidoreductase complex subunit C (Yersinia enterocolitica serotype O:8 / biotype 1B (strain NCTC 13174 / 8081)).